The chain runs to 422 residues: Metallocarboxypeptidase A-like protein TRV_02598 (422 aa).

An N-terminal signal peptide occupies residues 1–16 (MQSLLLLATLLGSALG). Positions 17-119 (GAIPSQSANY…ELLTLDGGAN (103 aa)) are cleaved as a propeptide — activation peptide. The Peptidase M14 domain maps to 125-421 (SYHKYEDHLK…AGVKAMFSKL (297 aa)). Residues histidine 185 and glutamate 188 each coordinate Zn(2+). Residues 185 to 188 (HARE), arginine 240, and 256 to 257 (NR) contribute to the substrate site. A disulfide bridge links cysteine 250 with cysteine 273. Histidine 311 is a binding site for Zn(2+). 312-313 (SY) lines the substrate pocket. The active-site Proton donor/acceptor is glutamate 387.

It belongs to the peptidase M14 family. Zn(2+) serves as cofactor.

The protein resides in the secreted. In terms of biological role, extracellular metalloprotease that contributes to pathogenicity. The chain is Metallocarboxypeptidase A-like protein TRV_02598 from Trichophyton verrucosum (strain HKI 0517).